Reading from the N-terminus, the 432-residue chain is Putative D-alanyl-D-alanine carboxypeptidase (432 aa).

The chain crosses the membrane as a helical; Signal-anchor span at residues 7–25 (ATVLLTFSLSAFAVEYPVL).

It belongs to the peptidase S12 family. YfeW subfamily.

It is found in the cell inner membrane. The catalysed reaction is Preferential cleavage: (Ac)2-L-Lys-D-Ala-|-D-Ala. Also transpeptidation of peptidyl-alanyl moieties that are N-acyl substituents of D-alanine.. The chain is Putative D-alanyl-D-alanine carboxypeptidase from Salmonella gallinarum (strain 287/91 / NCTC 13346).